The primary structure comprises 842 residues: Translation initiation factor IF-2 (842 aa).

Disordered regions lie at residues 1–41 (MVAK…GFPD) and 112–219 (RPNR…QTYQ). Basic and acidic residues-rich tracts occupy residues 32 to 41 (PEDKKQGFPD) and 153 to 165 (RRGEGRPFARDFS). The tr-type G domain maps to 328–497 (ARPPVVTVMG…MLQAEVMELR (170 aa)). The interval 337–344 (GHVDHGKT) is G1. 337 to 344 (GHVDHGKT) contacts GTP. Residues 362–366 (GITQH) form a G2 region. Positions 383-386 (DTPG) are G3. Residues 383 to 387 (DTPGH) and 437 to 440 (NKID) each bind GTP. Residues 437 to 440 (NKID) form a G4 region. The interval 473–475 (SAL) is G5.

It belongs to the TRAFAC class translation factor GTPase superfamily. Classic translation factor GTPase family. IF-2 subfamily.

It is found in the cytoplasm. Functionally, one of the essential components for the initiation of protein synthesis. Protects formylmethionyl-tRNA from spontaneous hydrolysis and promotes its binding to the 30S ribosomal subunits. Also involved in the hydrolysis of GTP during the formation of the 70S ribosomal complex. The chain is Translation initiation factor IF-2 (infB) from Treponema pallidum (strain Nichols).